We begin with the raw amino-acid sequence, 548 residues long: Natural resistance-associated macrophage protein 1 (548 aa).

Positions Met-1–Glu-38 are disordered. Residues Met-1–Leu-55 are Cytoplasmic-facing. A helical membrane pass occupies residues Trp-56–Gly-73. Residues Asn-74–Gly-82 lie on the Extracellular side of the membrane. The chain crosses the membrane as a helical span at residues Ala-83–Leu-102. The Cytoplasmic segment spans residues Cys-103 to Glu-139. Residues Leu-140–Leu-160 form a helical membrane-spanning segment. The Extracellular portion of the chain corresponds to Ser-161–Arg-164. The chain crosses the membrane as a helical span at residues Ile-165 to Leu-184. Residues Asp-185–Glu-193 are Cytoplasmic-facing. Residues Ala-194 to Ala-214 traverse the membrane as a helical segment. The Extracellular portion of the chain corresponds to Gln-215–Glu-237. The chain crosses the membrane as a helical span at residues Leu-238–Leu-256. The Cytoplasmic portion of the chain corresponds to His-257 to Glu-284. The helical transmembrane segment at Ala-285–Gly-304 threads the bilayer. Residues Gln-305–Gly-346 lie on the Extracellular side of the membrane. Asn-335 is a glycosylation site (N-linked (GlcNAc...) asparagine). A helical membrane pass occupies residues Val-347 to Leu-366. Over Ala-367–Arg-397 the chain is Cytoplasmic. A helical membrane pass occupies residues Val-398–Phe-415. Over Arg-416–Asp-426 the chain is Extracellular. The chain crosses the membrane as a helical span at residues Leu-427–Thr-447. Residues Ser-448–Lys-463 are Cytoplasmic-facing. A helical transmembrane segment spans residues Val-464–Leu-485. Topologically, residues Pro-486 to Tyr-493 are extracellular. The helical transmembrane segment at Phe-494–Trp-513 threads the bilayer. Residues Thr-514–Gly-548 are Cytoplasmic-facing.

Belongs to the NRAMP family.

The protein resides in the late endosome membrane. The protein localises to the lysosome membrane. It carries out the reaction Zn(2+)(in) + H(+)(out) = Zn(2+)(out) + H(+)(in). It catalyses the reaction Fe(2+)(in) + H(+)(out) = Fe(2+)(out) + H(+)(in). The catalysed reaction is Mn(2+)(in) + H(+)(out) = Mn(2+)(out) + H(+)(in). Functionally, macrophage-specific antiporter that fluxes metal ions in either direction against a proton gradient. Localized to late endosomal lysosomal membranes, delivers bivalent cations from the cytosol into these acidic compartments where they may directly affect antimicrobial activity. Involved in iron metabolism and host natural resistance to infection with intracellular parasites. Pathogen resistance involves sequestration of Fe(2+) and Mn(2+), cofactors of both prokaryotic and eukaryotic catalases and superoxide dismutases, not only to protect the macrophage against its own generation of reactive oxygen species, but to deny the cations to the pathogen for synthesis of its protective enzymes. This Bos taurus (Bovine) protein is Natural resistance-associated macrophage protein 1 (SLC11A1).